The sequence spans 350 residues: Hydroxymethylglutaryl-CoA synthase (350 aa).

Asp-30 is a binding site for (3S)-3-hydroxy-3-methylglutaryl-CoA. The active-site Proton donor/acceptor is the Glu-82. (3S)-3-hydroxy-3-methylglutaryl-CoA contacts are provided by Cys-114, Ser-155, Thr-203, and His-236. Catalysis depends on Cys-114, which acts as the Acyl-thioester intermediate. His-236 (proton donor/acceptor) is an active-site residue. Position 241 (Arg-241) interacts with CoA. (3S)-3-hydroxy-3-methylglutaryl-CoA contacts are provided by Arg-245, Asn-268, and Ser-298.

Belongs to the thiolase-like superfamily. Archaeal HMG-CoA synthase family. In terms of assembly, interacts with acetoacetyl-CoA thiolase that catalyzes the precedent step in the pathway and with a DUF35 protein. The acetoacetyl-CoA thiolase/HMG-CoA synthase complex channels the intermediate via a fused CoA-binding site, which allows for efficient coupling of the endergonic thiolase reaction with the exergonic HMGCS reaction.

The enzyme catalyses acetoacetyl-CoA + acetyl-CoA + H2O = (3S)-3-hydroxy-3-methylglutaryl-CoA + CoA + H(+). The protein operates within metabolic intermediate biosynthesis; (R)-mevalonate biosynthesis; (R)-mevalonate from acetyl-CoA: step 2/3. Functionally, catalyzes the condensation of acetyl-CoA with acetoacetyl-CoA to form 3-hydroxy-3-methylglutaryl-CoA (HMG-CoA). Functions in the mevalonate (MVA) pathway leading to isopentenyl diphosphate (IPP), a key precursor for the biosynthesis of isoprenoid compounds that are building blocks of archaeal membrane lipids. This chain is Hydroxymethylglutaryl-CoA synthase, found in Pyrobaculum aerophilum (strain ATCC 51768 / DSM 7523 / JCM 9630 / CIP 104966 / NBRC 100827 / IM2).